Consider the following 31-residue polypeptide: Circulin-B (31 aa).

A cross-link (cyclopeptide (Gly-Asn)) is located at residues 1–31 (GVIPCGESCVFIPCISTLLGCSCKNKVCYRN). 3 disulfides stabilise this stretch: Cys5–Cys21, Cys9–Cys23, and Cys14–Cys28.

Post-translationally, this is a cyclic peptide.

Functionally, probably participates in a plant defense mechanism. Has antibiotic activity. Inhibits the cytopathic effects and replication of the human immunodeficiency virus. Active against both Gram-positive and Gram-negative bacteria. This chain is Circulin-B, found in Chassalia parviflora.